The following is a 139-amino-acid chain: Acidic phospholipase A2 4 (139 aa).

The signal sequence occupies residues 1-16; it reads MRTLWIVAVWLVGVEG. Disulfide bonds link Cys-42/Cys-131, Cys-44/Cys-60, Cys-59/Cys-111, Cys-65/Cys-139, Cys-66/Cys-104, Cys-73/Cys-97, and Cys-91/Cys-102. Ca(2+)-binding residues include Tyr-43, Gly-45, and Gly-47. His-63 is a catalytic residue. Asp-64 contributes to the Ca(2+) binding site. Asp-105 is a catalytic residue.

This sequence belongs to the phospholipase A2 family. Group II subfamily. D49 sub-subfamily. Ca(2+) serves as cofactor. In terms of tissue distribution, expressed by the venom gland.

It is found in the secreted. The enzyme catalyses a 1,2-diacyl-sn-glycero-3-phosphocholine + H2O = a 1-acyl-sn-glycero-3-phosphocholine + a fatty acid + H(+). In terms of biological role, PLA2 catalyzes the calcium-dependent hydrolysis of the 2-acyl groups in 3-sn-phosphoglycerides. The chain is Acidic phospholipase A2 4 from Echis carinatus sochureki (Saw-scaled viper).